The primary structure comprises 354 residues: Ferredoxin--NADP reductase 2 (354 aa).

FAD is bound by residues Thr14, Asp33, Gln41, Tyr46, Ala86, Phe121, Asp289, and Thr330.

The protein belongs to the ferredoxin--NADP reductase type 2 family. In terms of assembly, homodimer. FAD is required as a cofactor.

The catalysed reaction is 2 reduced [2Fe-2S]-[ferredoxin] + NADP(+) + H(+) = 2 oxidized [2Fe-2S]-[ferredoxin] + NADPH. The protein is Ferredoxin--NADP reductase 2 of Christiangramia forsetii (strain DSM 17595 / CGMCC 1.15422 / KT0803) (Gramella forsetii).